The sequence spans 436 residues: Gustatory receptor for sugar taste 61a (436 aa).

Over 1–78 (MSRTSDDIRK…PQDVKFKVRS (78 aa)) the chain is Cytoplasmic. A helical membrane pass occupies residues 79-99 (IGLAVTGLFLLLGGMKTLVGA). Residues 100 to 111 (NILFTEGLNAKN) lie on the Extracellular side of the membrane. A helical transmembrane segment spans residues 112–132 (IVGLVFLIVGMVNWLNFVGFA). At 133 to 164 (RSWSHIMLPWSSVDILMLFPPYKRGKRSLRSK) the chain is on the cytoplasmic side. The chain crosses the membrane as a helical span at residues 165-185 (VNVLALSVVVLAVGDHMLYYA). Residues 186-214 (SGYCSYSMHILQCHTNHSRITFGLYLEKE) are Extracellular-facing. A glycan (N-linked (GlcNAc...) asparagine) is linked at N201. The helical transmembrane segment at 215–235 (FSDIMFIMPFNIFSMCYGFWL) threads the bilayer. Residues 236 to 237 (NG) lie on the Cytoplasmic side of the membrane. The chain crosses the membrane as a helical span at residues 238-258 (AFTFLWNFMDIFIVMTSIGLA). Residues 259–304 (QRFQQFAARVGALEGRHVPEALWYDIRRDHIRLCELASLVEASMSN) are Extracellular-facing. Residues 305–325 (IVFVSCANNVYVICNQALAIF) traverse the membrane as a helical segment. The Cytoplasmic segment spans residues 326–334 (TKLRHPINY). Residues 335-355 (VYFWYSLIFLLARTSLVFMTA) traverse the membrane as a helical segment. The Extracellular segment spans residues 356–436 (SKIHDASLLP…AKSHKGLRCA (81 aa)).

The protein belongs to the insect chemoreceptor superfamily. Gustatory receptor (GR) family. Gr5a subfamily. As to expression, expressed in sweet sensing neurons of classical chemosensory sensilla, but also in two supersensitive neurons of atypical taste sensilla.

The protein resides in the cell membrane. In terms of biological role, one of the few identified sugar gustatory receptors identified so far with glucose being its primary ligand and which mediates acceptance behavior. The protein is Gustatory receptor for sugar taste 61a (Gr61a) of Drosophila melanogaster (Fruit fly).